Consider the following 523-residue polypeptide: Polypyrimidine tract-binding protein 3 (523 aa).

A disordered region spans residues 1 to 25 (MNNSTSAGVYANGNDNKKFKGDRPP). RRM domains are found at residues 30 to 114 (RVLH…NLPN), 153 to 229 (LRII…FSKL), and 329 to 403 (SVLL…LSKH). A Glycyl lysine isopeptide (Lys-Gly) (interchain with G-Cter in SUMO2) cross-link involves residue Lys-36. The residue at position 98 (Tyr-98) is a Phosphotyrosine. Phosphothreonine is present on Thr-109. Lys-187 is covalently cross-linked (Glycyl lysine isopeptide (Lys-Gly) (interchain with G-Cter in SUMO2)). An N6-acetyllysine modification is found at Lys-394. Positions 406-426 (VQLPREGQEDQGLTKDFSNSP) are disordered. Ser-425 bears the Phosphoserine mark. The 76-residue stretch at 446 to 521 (ATLHLSNIPP…HHLRVSFSKS (76 aa)) folds into the RRM 4 domain.

As to quaternary structure, interacts with THBS4 (via the acidic amphipathic C-terminus). In terms of tissue distribution, detected specifically in spleen, thymus, lungs, and bone marrow.

RNA-binding protein that mediates pre-mRNA alternative splicing regulation. Plays a role in the regulation of cell proliferation, differentiation and migration. Positive regulator of EPO-dependent erythropoiesis. Participates in cell differentiation regulation by repressing tissue-specific exons. Promotes Fas exon 6 skipping. Binds RNA, preferentially to both poly(G) and poly(U). This Rattus norvegicus (Rat) protein is Polypyrimidine tract-binding protein 3 (Ptbp3).